Here is a 156-residue protein sequence, read N- to C-terminus: Small ribosomal subunit protein uS7 (156 aa).

It belongs to the universal ribosomal protein uS7 family. In terms of assembly, part of the 30S ribosomal subunit. Contacts proteins S9 and S11.

One of the primary rRNA binding proteins, it binds directly to 16S rRNA where it nucleates assembly of the head domain of the 30S subunit. Is located at the subunit interface close to the decoding center, probably blocks exit of the E-site tRNA. This is Small ribosomal subunit protein uS7 from Rhizobium johnstonii (strain DSM 114642 / LMG 32736 / 3841) (Rhizobium leguminosarum bv. viciae).